A 117-amino-acid chain; its full sequence is Probable non-functional immunoglobulin kappa variable 1D-42 (117 aa).

Residues 1–22 (MDMRVPAQLLGLLLLWLPGVRF) form the signal peptide. Residues 23 to 45 (DIQMTQSPSFLSASVGDRVSIIC) form a framework-1 region. One can recognise an Ig-like domain in the interval 23-117 (DIQMTQSPSF…YYCKQDFSYP (95 aa)). The cysteines at positions 45 and 110 are disulfide-linked. Residues 46-56 (WASEGISSNLA) form a complementarity-determining-1 region. A framework-2 region spans residues 57–71 (WYLQKPGKSPKLFLY). Positions 72–78 (DAKDLHP) are complementarity-determining-2. The interval 79-110 (GVSSRFSGRGSGTDFTLTIISLKPEDFAAYYC) is framework-3. Residues 111–117 (KQDFSYP) are complementarity-determining-3.

As to quaternary structure, immunoglobulins are composed of two identical heavy chains and two identical light chains; disulfide-linked.

The protein localises to the secreted. The protein resides in the cell membrane. Its function is as follows. Probable non-functional open reading frame (ORF) of V region of the variable domain of immunoglobulin light chains. Non-functional ORF generally cannot participate in the synthesis of a productive immunoglobulin chain due to altered V-(D)-J or switch recombination and/or splicing site (at mRNA level) and/or conserved amino acid change (protein level). Immunoglobulins, also known as antibodies, are membrane-bound or secreted glycoproteins produced by B lymphocytes. In the recognition phase of humoral immunity, the membrane-bound immunoglobulins serve as receptors which, upon binding of a specific antigen, trigger the clonal expansion and differentiation of B lymphocytes into immunoglobulins-secreting plasma cells. Secreted immunoglobulins mediate the effector phase of humoral immunity, which results in the elimination of bound antigens. The antigen binding site is formed by the variable domain of one heavy chain, together with that of its associated light chain. Thus, each immunoglobulin has two antigen binding sites with remarkable affinity for a particular antigen. The variable domains are assembled by a process called V-(D)-J rearrangement and can then be subjected to somatic hypermutations which, after exposure to antigen and selection, allow affinity maturation for a particular antigen. In Homo sapiens (Human), this protein is Probable non-functional immunoglobulin kappa variable 1D-42.